Reading from the N-terminus, the 311-residue chain is Porphobilinogen deaminase (311 aa).

The residue at position 241 (C241) is an S-(dipyrrolylmethanemethyl)cysteine.

The protein belongs to the HMBS family. As to quaternary structure, monomer. Dipyrromethane serves as cofactor.

The catalysed reaction is 4 porphobilinogen + H2O = hydroxymethylbilane + 4 NH4(+). It functions in the pathway porphyrin-containing compound metabolism; protoporphyrin-IX biosynthesis; coproporphyrinogen-III from 5-aminolevulinate: step 2/4. Functionally, tetrapolymerization of the monopyrrole PBG into the hydroxymethylbilane pre-uroporphyrinogen in several discrete steps. This chain is Porphobilinogen deaminase, found in Bacillus pumilus (strain SAFR-032).